The chain runs to 170 residues: RNA pyrophosphohydrolase (170 aa).

The 144-residue stretch at 6–149 (GFRPNVGIVI…KRDVYRRALK (144 aa)) folds into the Nudix hydrolase domain. The Nudix box signature appears at 38 to 59 (GGIDDGETPEQAMYRELYEEVG).

Belongs to the Nudix hydrolase family. RppH subfamily. It depends on a divalent metal cation as a cofactor.

In terms of biological role, accelerates the degradation of transcripts by removing pyrophosphate from the 5'-end of triphosphorylated RNA, leading to a more labile monophosphorylated state that can stimulate subsequent ribonuclease cleavage. The protein is RNA pyrophosphohydrolase of Aliivibrio fischeri (strain ATCC 700601 / ES114) (Vibrio fischeri).